Consider the following 341-residue polypeptide: Anthranilate phosphoribosyltransferase (341 aa).

5-phospho-alpha-D-ribose 1-diphosphate is bound by residues Gly-82, 85 to 86 (GD), Thr-90, 92 to 95 (NIST), 110 to 118 (KHGGRSVSG), and Ser-122. Gly-82 contributes to the anthranilate binding site. Residue Ser-94 coordinates Mg(2+). An anthranilate-binding site is contributed by Arg-168. Residues Asp-227 and Glu-228 each coordinate Mg(2+).

It belongs to the anthranilate phosphoribosyltransferase family. Homodimer. The cofactor is Mg(2+).

The enzyme catalyses N-(5-phospho-beta-D-ribosyl)anthranilate + diphosphate = 5-phospho-alpha-D-ribose 1-diphosphate + anthranilate. It participates in amino-acid biosynthesis; L-tryptophan biosynthesis; L-tryptophan from chorismate: step 2/5. Functionally, catalyzes the transfer of the phosphoribosyl group of 5-phosphorylribose-1-pyrophosphate (PRPP) to anthranilate to yield N-(5'-phosphoribosyl)-anthranilate (PRA). This Nitrosomonas europaea (strain ATCC 19718 / CIP 103999 / KCTC 2705 / NBRC 14298) protein is Anthranilate phosphoribosyltransferase.